The chain runs to 282 residues: 2,3,4,5-tetrahydropyridine-2,6-dicarboxylate N-succinyltransferase (282 aa).

Substrate contacts are provided by Arg109 and Asp146.

The protein belongs to the transferase hexapeptide repeat family. As to quaternary structure, homotrimer.

It is found in the cytoplasm. It catalyses the reaction (S)-2,3,4,5-tetrahydrodipicolinate + succinyl-CoA + H2O = (S)-2-succinylamino-6-oxoheptanedioate + CoA. The protein operates within amino-acid biosynthesis; L-lysine biosynthesis via DAP pathway; LL-2,6-diaminopimelate from (S)-tetrahydrodipicolinate (succinylase route): step 1/3. The chain is 2,3,4,5-tetrahydropyridine-2,6-dicarboxylate N-succinyltransferase from Bartonella quintana (strain Toulouse) (Rochalimaea quintana).